The primary structure comprises 233 residues: MWGYLSLMPVFLAVWAISGVWIVFAIAVTNRTVDLSKGFPYISICGSFPPQSCIFSQVLNMGAALAAWICIVRYHQLRDWGVRRWPNQLILWTGLLCALGTSVVGNFQEKNQRPTHLAGAFLAFILGNVYFWLQLLLWRLKRLPQPGAAWIGPLRLGLCSVCTILIVAMIVLHACSLRSVSAACEWVVAMLLFALFGLLAVDFSALESCTLCVQPWPSLSPPPASPISLPVQL.

Topologically, residues 1-7 (MWGYLSL) are cytoplasmic. The chain crosses the membrane as a helical span at residues 8–28 (MPVFLAVWAISGVWIVFAIAV). Topologically, residues 29–51 (TNRTVDLSKGFPYISICGSFPPQ) are extracellular. Residue asparagine 30 is glycosylated (N-linked (GlcNAc...) asparagine). A helical membrane pass occupies residues 52–72 (SCIFSQVLNMGAALAAWICIV). The Cytoplasmic segment spans residues 73–84 (RYHQLRDWGVRR). The helical transmembrane segment at 85 to 105 (WPNQLILWTGLLCALGTSVVG) threads the bilayer. The Extracellular portion of the chain corresponds to 106–116 (NFQEKNQRPTH). A helical membrane pass occupies residues 117-137 (LAGAFLAFILGNVYFWLQLLL). The Cytoplasmic portion of the chain corresponds to 138–155 (WRLKRLPQPGAAWIGPLR). A helical membrane pass occupies residues 156–176 (LGLCSVCTILIVAMIVLHACS). Topologically, residues 177-185 (LRSVSAACE) are extracellular. Residues 186-206 (WVVAMLLFALFGLLAVDFSAL) form a helical membrane-spanning segment. Topologically, residues 207–233 (ESCTLCVQPWPSLSPPPASPISLPVQL) are cytoplasmic.

Belongs to the DRAM/TMEM150 family. In terms of tissue distribution, highly expressed in the colon and lung with comparatively high levels also detectable in the lymph nodes, placenta, duodenum, peripheral blood mononuclear cells and spleen.

The protein localises to the cell membrane. The protein resides in the endosome membrane. Its subcellular location is the cytoplasmic vesicle. It is found in the autophagosome membrane. Its function is as follows. Modulator of macroautophagy that causes accumulation of autophagosomes under basal conditions and enhances autophagic flux. Represses cell death and promotes long-term clonogenic survival of cells grown in the absence of glucose in a macroautophagy-independent manner. May have some role in extracellular matrix engulfment or growth factor receptor recycling, both of which can modulate cell survival. The sequence is that of Modulator of macroautophagy TMEM150B from Homo sapiens (Human).